The chain runs to 213 residues: Probable GTP-binding protein EngB (213 aa).

Residues 30–204 enclose the EngB-type G domain; sequence EGFEVAFAGR…YTVLAGWMEL (175 aa). GTP contacts are provided by residues 38 to 45, 64 to 68, 82 to 85, 149 to 152, and 182 to 185; these read GRSNAGKS, GRTQL, DLPG, TKAD, and LFSA. Mg(2+) is bound by residues Ser45 and Thr66.

This sequence belongs to the TRAFAC class TrmE-Era-EngA-EngB-Septin-like GTPase superfamily. EngB GTPase family. Requires Mg(2+) as cofactor.

In terms of biological role, necessary for normal cell division and for the maintenance of normal septation. The sequence is that of Probable GTP-binding protein EngB from Pseudomonas fluorescens (strain ATCC BAA-477 / NRRL B-23932 / Pf-5).